The following is a 209-amino-acid chain: uncharacterized protein (209 aa).

Residues 1 to 15 are compositionally biased toward basic and acidic residues; it reads MHRIDTKTAQKDKFG. Positions 1 to 34 are disordered; it reads MHRIDTKTAQKDKFGAGKNGFTRGNPQTGTPATD. Residues 22–31 show a composition bias toward polar residues; the sequence is TRGNPQTGTP.

To E.coli YfdL and M.jannaschii MJ0347.

This is an uncharacterized protein from Escherichia coli (strain K12).